A 603-amino-acid polypeptide reads, in one-letter code: Myotubularin (603 aa).

Over residues Met-1–Ser-13 the composition is skewed to polar residues. A disordered region spans residues Met-1 to Gly-32. 2 positions are modified to phosphoserine: Ser-13 and Ser-18. A compositionally biased stretch (basic and acidic residues) spans Leu-14–Gly-32. Residues Arg-29 to Gly-97 form the GRAM domain. Residues Gly-163–Tyr-538 form the Myotubularin phosphatase domain. Residues Asn-288, Asn-313, and Ile-314 each coordinate a 1,2-diacyl-sn-glycero-3-phospho-(1D-myo-inositol-3,5-bisphosphate). 3 residues coordinate a 1,2-diacyl-sn-glycero-3-phospho-(1D-myo-inositol-3-phosphate): Asn-288, Asn-313, and Ile-314. The active-site Phosphocysteine intermediate is Cys-375. Positions 376, 377, 378, 379, 380, 381, 417, and 421 each coordinate a 1,2-diacyl-sn-glycero-3-phospho-(1D-myo-inositol-3,5-bisphosphate). A 1,2-diacyl-sn-glycero-3-phospho-(1D-myo-inositol-3-phosphate) contacts are provided by Ser-376, Asp-377, Gly-378, Trp-379, Asp-380, and Arg-381. Arg-421 contributes to the a 1,2-diacyl-sn-glycero-3-phospho-(1D-myo-inositol-3-phosphate) binding site. Thr-495 is modified (phosphothreonine). The segment at Ala-580–Phe-603 is disordered. Residues Ser-583–Ser-593 show a composition bias toward low complexity. Position 588 is a phosphoserine (Ser-588).

This sequence belongs to the protein-tyrosine phosphatase family. Non-receptor class myotubularin subfamily. Heterodimer with MTMR12. Interacts with KMT2A/MLL1 (via SET domain). Interacts with DES in skeletal muscle but not in cardiac muscle. Interacts with SPEG.

Its subcellular location is the cytoplasm. It is found in the cell membrane. It localises to the cell projection. The protein resides in the filopodium. The protein localises to the ruffle. Its subcellular location is the late endosome. It is found in the myofibril. It localises to the sarcomere. It catalyses the reaction a 1,2-diacyl-sn-glycero-3-phospho-(1D-myo-inositol-3-phosphate) + H2O = a 1,2-diacyl-sn-glycero-3-phospho-(1D-myo-inositol) + phosphate. The enzyme catalyses a 1,2-diacyl-sn-glycero-3-phospho-(1D-myo-inositol-3,5-bisphosphate) + H2O = a 1,2-diacyl-sn-glycero-3-phospho-(1D-myo-inositol-5-phosphate) + phosphate. It carries out the reaction 1,2-dioctanoyl-sn-glycero-3-phospho-(1-D-myo-inositol-3-phosphate) + H2O = 1,2-dioctanoyl-sn-glycero-3-phospho-(1D-myo-inositol) + phosphate. The catalysed reaction is 1,2-dioctanoyl-sn-glycero-3-phospho-(1D-myo-inositol-3,5-bisphosphate) + H2O = 1,2-dioctanoyl-sn-glycero-3-phospho-(1D-myo-inositol-5-phosphate) + phosphate. It catalyses the reaction 1,2-dihexadecanoyl-sn-glycero-3-phospho-(1D-myo-inositol-3,5-phosphate) + H2O = 1,2-dihexadecanoyl-sn-glycero-3-phospho-(1D-myo-inositol-5-phosphate) + phosphate. With respect to regulation, allosterically activated by phosphatidylinositol 5-phosphate (PI5P). Its function is as follows. Lipid phosphatase which dephosphorylates phosphatidylinositol 3-monophosphate (PI3P) and phosphatidylinositol 3,5-bisphosphate (PI(3,5)P2). Has also been shown to dephosphorylate phosphotyrosine- and phosphoserine-containing peptides. Negatively regulates EGFR degradation through regulation of EGFR trafficking from the late endosome to the lysosome. Plays a role in vacuolar formation and morphology. Regulates desmin intermediate filament assembly and architecture. Plays a role in mitochondrial morphology and positioning. Required for skeletal muscle maintenance but not for myogenesis. In skeletal muscles, stabilizes MTMR12 protein levels. This chain is Myotubularin, found in Bos taurus (Bovine).